Reading from the N-terminus, the 460-residue chain is 3-isopropylmalate dehydratase large subunit (460 aa).

Residues cysteine 338, cysteine 398, and cysteine 401 each contribute to the [4Fe-4S] cluster site.

Belongs to the aconitase/IPM isomerase family. LeuC type 1 subfamily. In terms of assembly, heterodimer of LeuC and LeuD. [4Fe-4S] cluster serves as cofactor.

The enzyme catalyses (2R,3S)-3-isopropylmalate = (2S)-2-isopropylmalate. It participates in amino-acid biosynthesis; L-leucine biosynthesis; L-leucine from 3-methyl-2-oxobutanoate: step 2/4. Catalyzes the isomerization between 2-isopropylmalate and 3-isopropylmalate, via the formation of 2-isopropylmaleate. The sequence is that of 3-isopropylmalate dehydratase large subunit from Streptococcus thermophilus (strain CNRZ 1066).